The sequence spans 191 residues: PBAN-type neuropeptides (191 aa).

An N-terminal signal peptide occupies residues 1-17 (MFSPLLFFAVSISCVLA). L44 carries the post-translational modification Leucine amide. Residues 48-91 (SLRISTEDNRQAFFKLLEAADALKYYYDRLPYEMQADEPETRVT) constitute a propeptide that is removed on maturation. 4 positions are modified to leucine amide: L100, L120, L156, and L166. Positions 169 to 191 (ELSYDMLPSKLRLVRSTNRTQST) are excised as a propeptide.

This sequence belongs to the pyrokinin family. In terms of tissue distribution, expressed in the subesophageal ganglion.

Its subcellular location is the secreted. In terms of biological role, a hormone that controls sex pheromone production in females and pheromone responsiveness in male. This is PBAN-type neuropeptides from Spodoptera littoralis (Egyptian cotton leafworm).